Here is a 495-residue protein sequence, read N- to C-terminus: NADH-ubiquinone oxidoreductase chain 4 (495 aa).

14 helical membrane passes run 9-29 (YSNL…ILVI), 37-57 (IRGI…FFWI), 89-109 (ISLF…LVGF), 118-138 (EYMI…CSLD), 139-159 (LLIF…IIGV), 173-193 (FFLY…FIFF), 214-234 (ILLW…VPVH), 245-265 (PTAG…YGFL), 272-292 (FPEA…IAII), 307-327 (IIAY…FSLN), 335-355 (ILLM…VGAL), 367-387 (YGGL…FTLA), 413-433 (LVAT…LWLY), and 457-477 (VLIF…PEVF).

This sequence belongs to the complex I subunit 4 family.

The protein localises to the mitochondrion membrane. It catalyses the reaction a ubiquinone + NADH + 5 H(+)(in) = a ubiquinol + NAD(+) + 4 H(+)(out). In terms of biological role, core subunit of the mitochondrial membrane respiratory chain NADH dehydrogenase (Complex I) that is believed to belong to the minimal assembly required for catalysis. Complex I functions in the transfer of electrons from NADH to the respiratory chain. The immediate electron acceptor for the enzyme is believed to be ubiquinone. This is NADH-ubiquinone oxidoreductase chain 4 (ND4) from Marchantia polymorpha (Common liverwort).